The chain runs to 313 residues: Porphobilinogen deaminase (313 aa).

S-(dipyrrolylmethanemethyl)cysteine is present on C242.

This sequence belongs to the HMBS family. Monomer. Requires dipyrromethane as cofactor.

It carries out the reaction 4 porphobilinogen + H2O = hydroxymethylbilane + 4 NH4(+). Its pathway is porphyrin-containing compound metabolism; protoporphyrin-IX biosynthesis; coproporphyrinogen-III from 5-aminolevulinate: step 2/4. Functionally, tetrapolymerization of the monopyrrole PBG into the hydroxymethylbilane pre-uroporphyrinogen in several discrete steps. This Escherichia coli O6:H1 (strain CFT073 / ATCC 700928 / UPEC) protein is Porphobilinogen deaminase.